The primary structure comprises 334 residues: Chitinase 9 (334 aa).

Residues methionine 1–alanine 23 form the signal peptide. A Chitin-binding type-1 domain is found at glutamate 24–glycine 64. 8 disulfide bridges follow: cysteine 26–cysteine 41, cysteine 35–cysteine 47, cysteine 38–cysteine 65, cysteine 40–cysteine 54, cysteine 58–cysteine 62, cysteine 107–cysteine 169, cysteine 181–cysteine 189, and cysteine 288–cysteine 320. Glutamate 151 acts as the Proton donor in catalysis.

Belongs to the glycosyl hydrolase 19 family. Chitinase class I subfamily. In terms of tissue distribution, expressed at high levels in roots, sheaths and meristems.

It catalyses the reaction Random endo-hydrolysis of N-acetyl-beta-D-glucosaminide (1-&gt;4)-beta-linkages in chitin and chitodextrins.. Its function is as follows. May play a role in defense against fungal pathogens containing chitin. In Oryza sativa subsp. japonica (Rice), this protein is Chitinase 9 (Cht9).